Consider the following 234-residue polypeptide: uncharacterized protein (234 aa).

The HTH tetR-type domain maps to 24–83 (VERRNELVDGTIEAIRRHGRFLSMDEIAAEIGVSKTVLYRYFVDKNDLTTAVMMRFTQTT). The H-T-H motif DNA-binding region spans 46-65 (SMDEIAAEIGVSKTVLYRYF).

This is an uncharacterized protein from Mycobacterium tuberculosis (strain CDC 1551 / Oshkosh).